We begin with the raw amino-acid sequence, 3122 residues long: DNA polymerase zeta catalytic subunit (3122 aa).

Disordered regions lie at residues 270 to 289 (QRRR…SQDC), 425 to 457 (GYQG…NEPQ), 487 to 509 (LCRN…EMEW), 524 to 545 (LDGT…RAHS), and 842 to 886 (TSTK…TFEN). Over residues 277–286 (ESSQISQPES) the composition is skewed to polar residues. Positions 497–509 (EEDDSSSEEEMEW) are enriched in acidic residues. 2 stretches are compositionally biased toward polar residues: residues 533 to 545 (DNPL…RAHS) and 842 to 860 (TSTK…THND). Residue S1029 is modified to Phosphoserine. Disordered regions lie at residues 1034–1075 (YPIY…TLSF), 1154–1285 (VYNT…PTGI), 1429–1453 (VSVS…ESQT), 1538–1616 (KAQS…LSDD), 1842–1869 (NDVL…SFTP), 1959–1979 (NPRP…ESSN), and 2091–2138 (AAVP…RHSS). T1040 is modified (phosphothreonine). Composition is skewed to basic residues over residues 1042 to 1063 (KKSH…KQHR) and 1166 to 1179 (KASR…KSKA). Positions 1215-1239 (RANEKSLSRKHAIPADEKMKPHSEA) are enriched in basic and acidic residues. A compositionally biased stretch (polar residues) spans 1243 to 1270 (PNHQSVSELTSSSGAQALSKQKEMSQTG). Residues 1429 to 1440 (VSVSEQSKTSET) show a composition bias toward low complexity. Polar residues-rich tracts occupy residues 1441-1453 (CSPG…ESQT) and 1538-1561 (KAQS…ISVS). Residues 1566 to 1587 (KANKRTRPVTSPRKPRTPRRTK) show a composition bias toward basic residues. The span at 1588 to 1598 (PKEQTPRRLKV) shows a compositional bias: basic and acidic residues. Residues 1602-1615 (NLQTSGHLDNSLSD) are compositionally biased toward polar residues. The mediates interaction with MAD2L2 stretch occupies residues 1844–1895 (VLTPTPDSSPRSTSSPLQSKNGSFTPRTAHILKPLMSPPSREEIVATLLDHD). The span at 1846-1859 (TPTPDSSPRSTSSP) shows a compositional bias: low complexity. Positions 1860–1869 (LQSKNGSFTP) are enriched in polar residues. S1964 bears the Phosphoserine mark. Zn(2+) is bound by residues C3034, C3037, C3046, and C3049. A CysA-type zinc finger spans residues 3034 to 3049 (CPVCDDLTQHGICSKC). Residues C3078, C3081, C3091, and C3096 each coordinate [4Fe-4S] cluster. The CysB motif signature appears at 3078–3096 (CRNCTGSFDRHIPCVSLNC).

Belongs to the DNA polymerase type-B family. In terms of assembly, heterodimer with MAD2L2. This dimer forms the minimal DNA polymerase zeta complex (Pol-zeta2), with REV3L bearing DNA polymerase catalytic activity, although its activity is very low in this context. Component of the tetrameric Pol-zeta complex (Pol-zeta4), which consists of REV3L, MAD2L2, POLD2 and POLD3; Pol-zeta4 is the fully active form of DNA polymerase zeta. [4Fe-4S] cluster is required as a cofactor.

Its subcellular location is the nucleus. The catalysed reaction is DNA(n) + a 2'-deoxyribonucleoside 5'-triphosphate = DNA(n+1) + diphosphate. In terms of biological role, catalytic subunit of the DNA polymerase zeta complex, an error-prone polymerase specialized in translesion DNA synthesis (TLS). Lacks an intrinsic 3'-5' exonuclease activity and thus has no proofreading function. This Mus musculus (Mouse) protein is DNA polymerase zeta catalytic subunit (Rev3l).